The chain runs to 367 residues: Endophilin-A2 (367 aa).

The membrane-binding amphipathic helix stretch occupies residues 1 to 21; it reads MSVAGLKKQFYKASQLVSEKV. Residues 18 to 249 enclose the BAR domain; sequence SEKVGGAEGT…LKRRMREASS (232 aa). The segment at 60 to 87 is required for dimerization upon membrane association; that stretch reads PNPASRAKLTMLNTMSKIRGQVKNPGYP. Residues 181-250 are a coiled coil; sequence EELRQAMEKF…KRRMREASSR (70 aa). Positions 218-254 are interaction with ARC; the sequence is LVDAQLDYHRQAVQILDELAEKLKRRMREASSRPRRE. Positions 243 to 293 are disordered; that stretch reads RMREASSRPRREYKPKPRETYDFGESDQSNGGFSCTPTPKVSASSSFRSDK. Residues 245–263 show a composition bias toward basic and acidic residues; the sequence is REASSRPRREYKPKPRETY. Residues 268–289 show a composition bias toward polar residues; it reads SDQSNGGFSCTPTPKVSASSSF. Residues 305–364 form the SH3 domain; that stretch reads LDQPCCKALYDFEPENDGELGFKEGDIITLTNQIDENWYEGMINGQSGFFPLNYVEVLVP.

It belongs to the endophilin family. As to quaternary structure, interacts with ARC. Interacts with SYNJ1 and DNM1. As to expression, highest level in central region of the theca of developing follicles (at protein level). Expressed at highest level in brain and testis, at high level in kidney, lung and stroma, low level in spleen and adrenal gland (at protein level). Expressed in most tissue with highest levels in small ovarian follicles, brain and testis.

It is found in the cytoplasm. Its subcellular location is the early endosome membrane. It localises to the cell projection. The protein localises to the podosome. Functionally, implicated in endocytosis. May recruit other proteins to membranes with high curvature. The protein is Endophilin-A2 of Gallus gallus (Chicken).